Consider the following 212-residue polypeptide: Inner membrane-spanning protein YciB (212 aa).

A run of 6 helical transmembrane segments spans residues phenylalanine 19 to leucine 39, alanine 47 to leucine 67, alanine 82 to tryptophan 102, threonine 105 to glycine 122, leucine 147 to phenylalanine 167, and leucine 177 to leucine 197.

This sequence belongs to the YciB family.

It is found in the cell inner membrane. Functionally, plays a role in cell envelope biogenesis, maintenance of cell envelope integrity and membrane homeostasis. This chain is Inner membrane-spanning protein YciB, found in Thioalkalivibrio sulfidiphilus (strain HL-EbGR7).